A 632-amino-acid chain; its full sequence is tRNA uridine 5-carboxymethylaminomethyl modification enzyme MnmG (632 aa).

FAD is bound by residues 16–21, valine 128, and serine 183; that span reads GAGHAG. The interval 206 to 225 is disordered; that stretch reads PRVNGNTIDYSKTEEEPGDK. Over residues 216–225 the composition is skewed to basic and acidic residues; that stretch reads SKTEEEPGDK. 277 to 291 lines the NAD(+) pocket; it reads GPRYCPSIEDKVVRF. Glutamine 374 provides a ligand contact to FAD.

Belongs to the MnmG family. In terms of assembly, homodimer. Heterotetramer of two MnmE and two MnmG subunits. It depends on FAD as a cofactor.

Its subcellular location is the cytoplasm. NAD-binding protein involved in the addition of a carboxymethylaminomethyl (cmnm) group at the wobble position (U34) of certain tRNAs, forming tRNA-cmnm(5)s(2)U34. This chain is tRNA uridine 5-carboxymethylaminomethyl modification enzyme MnmG, found in Lactobacillus acidophilus (strain ATCC 700396 / NCK56 / N2 / NCFM).